A 198-amino-acid chain; its full sequence is Translation machinery-associated protein 22 (198 aa).

Residues 100-171 (IIIKRSERTK…EIVEMIRQQV (72 aa)) form the SUI1 domain.

Belongs to the DENR family. As to quaternary structure, interacts with the 40S ribosomal subunit.

It is found in the cytoplasm. The protein is Translation machinery-associated protein 22 (TMA22) of Cryptococcus neoformans var. neoformans serotype D (strain B-3501A) (Filobasidiella neoformans).